A 687-amino-acid polypeptide reads, in one-letter code: Glycine--tRNA ligase beta subunit (687 aa).

It belongs to the class-II aminoacyl-tRNA synthetase family. Tetramer of two alpha and two beta subunits.

The protein localises to the cytoplasm. The catalysed reaction is tRNA(Gly) + glycine + ATP = glycyl-tRNA(Gly) + AMP + diphosphate. This is Glycine--tRNA ligase beta subunit from Neisseria meningitidis serogroup C (strain 053442).